Consider the following 303-residue polypeptide: Diaminopimelate epimerase (303 aa).

The substrate site is built by asparagine 15, glutamine 47, and asparagine 67. The Proton donor role is filled by cysteine 76. Substrate-binding positions include 77 to 78, asparagine 163, asparagine 197, and 215 to 216; these read GN and ER. The active-site Proton acceptor is cysteine 224. 225 to 226 lines the substrate pocket; it reads GS.

It belongs to the diaminopimelate epimerase family. In terms of assembly, homodimer.

It is found in the cytoplasm. It catalyses the reaction (2S,6S)-2,6-diaminopimelate = meso-2,6-diaminopimelate. Its pathway is amino-acid biosynthesis; L-lysine biosynthesis via DAP pathway; DL-2,6-diaminopimelate from LL-2,6-diaminopimelate: step 1/1. Functionally, catalyzes the stereoinversion of LL-2,6-diaminopimelate (L,L-DAP) to meso-diaminopimelate (meso-DAP), a precursor of L-lysine and an essential component of the bacterial peptidoglycan. The polypeptide is Diaminopimelate epimerase (Allorhizobium ampelinum (strain ATCC BAA-846 / DSM 112012 / S4) (Agrobacterium vitis (strain S4))).